The following is a 649-amino-acid chain: Threonine--tRNA ligase (649 aa).

One can recognise a TGS domain in the interval 1-60 (MHVTLPDGKQLDLQAGATALDVARALGPRLAQDALAALVNGELMDLMTPLPEGAQVRLIT). Residues 248-544 (DHRKLGRELE…LIEHYGGDFP (297 aa)) are catalytic. 3 residues coordinate Zn(2+): cysteine 341, histidine 392, and histidine 521.

This sequence belongs to the class-II aminoacyl-tRNA synthetase family. Homodimer. Zn(2+) serves as cofactor.

The protein resides in the cytoplasm. The catalysed reaction is tRNA(Thr) + L-threonine + ATP = L-threonyl-tRNA(Thr) + AMP + diphosphate + H(+). Its function is as follows. Catalyzes the attachment of threonine to tRNA(Thr) in a two-step reaction: L-threonine is first activated by ATP to form Thr-AMP and then transferred to the acceptor end of tRNA(Thr). Also edits incorrectly charged L-seryl-tRNA(Thr). The protein is Threonine--tRNA ligase of Deinococcus geothermalis (strain DSM 11300 / CIP 105573 / AG-3a).